We begin with the raw amino-acid sequence, 231 residues long: CLAVATA3/ESR (CLE)-related protein 4B-1 (231 aa).

A signal peptide spans 1 to 21 (MATNTMLCLLILSVVLALAFA). The tract at residues 21–83 (ATNKKGDEEP…SNLLPNNNWM (63 aa)) is required for secretion from the host cytoplasm to the host apoplasm. N-linked (GlcNAc...) asparagine glycosylation occurs at N32. Positions 116–231 (RKTGMHSQRH…APAGPDPIHH (116 aa)) are disordered. Basic and acidic residues-rich tracts occupy residues 125-137 (HHEE…EKRV) and 144-221 (PIHH…EKRG). An A-1 repeat occupies 127–135 (EETTLEQEK). The segment at 127–219 (EETTLEQEKR…HEETTFEQEK (93 aa)) is 5 X approximate repeat A. A CLE-1 repeat occupies 136 to 147 (RVAGAGPDPIHH). Residues 136-231 (RVAGAGPDPI…APAGPDPIHH (96 aa)) form a 5 X approximate repeat CLE region. The stretch at 148-156 (QDTTLEQEK) is one A-2 repeat. A CLE-2 repeat occupies 157 to 168 (RAVPAGPDPKHH). The A-3 repeat unit spans residues 169–177 (EETTLEQEK). The CLE-3 repeat unit spans residues 178–189 (RAVPAGPDPKHH). The A-4 repeat unit spans residues 190 to 198 (EETTLEQEK). The stretch at 199 to 210 (RAVPAGPDPKHH) is one CLE-4 repeat. An A-5 repeat occupies 211-219 (EETTFEQEK). The CLE-5 repeat unit spans residues 220–231 (RGAPAGPDPIHH).

This sequence belongs to the CLV3/ESR signal peptide family. As to expression, highly expressed exclusively within the dorsal esophageal gland cell during syncytium formation in host plants.

Its subcellular location is the secreted. The protein resides in the host cytoplasm. The protein localises to the host extracellular space. It is found in the extracellular space. It localises to the apoplast. Functionally, mimics host plant CLE extracellular signal peptides that regulate cell fate. May play a role in the differentiation or division of feeding cells (syncytia) induced in plant roots during infection. The sequence is that of CLAVATA3/ESR (CLE)-related protein 4B-1 (CLE-4B-1) from Globodera rostochiensis (Golden nematode worm).